We begin with the raw amino-acid sequence, 595 residues long: APOBEC1 complementation factor (595 aa).

3 RRM domains span residues 56 to 134, 136 to 218, and 231 to 303; these read CEIF…ASVD, CRLF…WAEP, and KILY…LAKP. The interval 360-409 is required for nuclear localization; the sequence is HFPATKGHLSNRALIRTPSVREIYMNVPVGAAGVRGLGGRGYLAYTGLGR.

As to quaternary structure, part of the apolipoprotein B mRNA editing complex with APOBEC1. Interacts with TNPO2; TNPO2 may be responsible for transport of A1CF into the nucleus. Interacts with SYNCRIP. Interacts with CELF2/CUGBP2. Interacts with RBM47. Expressed primarily in liver, small intestine and kidney.

The protein localises to the nucleus. Its subcellular location is the endoplasmic reticulum. It localises to the cytoplasm. In terms of biological role, essential component of the apolipoprotein B mRNA editing enzyme complex which is responsible for the postranscriptional editing of a CAA codon for Gln to a UAA codon for stop in APOB mRNA. Binds to APOB mRNA and is probably responsible for docking the catalytic subunit, APOBEC1, to the mRNA to allow it to deaminate its target cytosine. The complex also seems to protect the edited APOB mRNA from nonsense-mediated decay. This is APOBEC1 complementation factor (A1cf) from Mus musculus (Mouse).